We begin with the raw amino-acid sequence, 357 residues long: Selenide, water dikinase (357 aa).

Residue cysteine 25 is part of the active site. Residues lysine 28 and 57 to 59 contribute to the ATP site; that span reads TAD. Aspartate 60 contacts Mg(2+). Residues aspartate 77, aspartate 100, and 148–150 each bind ATP; that span reads GHS. Residue aspartate 100 participates in Mg(2+) binding. Aspartate 236 lines the Mg(2+) pocket.

Belongs to the selenophosphate synthase 1 family. Class I subfamily. As to quaternary structure, homodimer. Mg(2+) serves as cofactor.

It catalyses the reaction hydrogenselenide + ATP + H2O = selenophosphate + AMP + phosphate + 2 H(+). Synthesizes selenophosphate from selenide and ATP. In Pseudomonas straminea, this protein is Selenide, water dikinase.